A 273-amino-acid chain; its full sequence is 4-hydroxy-tetrahydrodipicolinate reductase (273 aa).

Residues 12–17 and E38 each bind NAD(+); that span reads GAGGRM. NADP(+) is bound at residue R39. Residues 102–104 and 126–129 contribute to the NAD(+) site; these read GTT and AANF. The active-site Proton donor/acceptor is the H159. A (S)-2,3,4,5-tetrahydrodipicolinate-binding site is contributed by H160. K163 serves as the catalytic Proton donor. Residue 169 to 170 participates in (S)-2,3,4,5-tetrahydrodipicolinate binding; that stretch reads GT.

It belongs to the DapB family. Homotetramer.

It localises to the cytoplasm. It catalyses the reaction (S)-2,3,4,5-tetrahydrodipicolinate + NAD(+) + H2O = (2S,4S)-4-hydroxy-2,3,4,5-tetrahydrodipicolinate + NADH + H(+). The catalysed reaction is (S)-2,3,4,5-tetrahydrodipicolinate + NADP(+) + H2O = (2S,4S)-4-hydroxy-2,3,4,5-tetrahydrodipicolinate + NADPH + H(+). Its pathway is amino-acid biosynthesis; L-lysine biosynthesis via DAP pathway; (S)-tetrahydrodipicolinate from L-aspartate: step 4/4. In terms of biological role, catalyzes the conversion of 4-hydroxy-tetrahydrodipicolinate (HTPA) to tetrahydrodipicolinate. The sequence is that of 4-hydroxy-tetrahydrodipicolinate reductase from Shigella boydii serotype 18 (strain CDC 3083-94 / BS512).